We begin with the raw amino-acid sequence, 406 residues long: Protein translocase subunit SecD (406 aa).

6 consecutive transmembrane segments (helical) span residues 8–28 (IVIL…NPIN), 240–260 (MAAM…YRVA), 262–282 (FVAD…MCAI), 289–309 (PGIA…VIIF), 334–354 (FPAI…LFFF), and 361–381 (GFAV…IFIT).

The protein belongs to the SecD/SecF family. SecD subfamily. Forms a complex with SecF. Part of the essential Sec protein translocation apparatus which comprises SecA, SecYEG and auxiliary proteins SecDF. Other proteins may also be involved.

The protein resides in the cell inner membrane. Functionally, part of the Sec protein translocase complex. Interacts with the SecYEG preprotein conducting channel. SecDF uses the proton motive force (PMF) to complete protein translocation after the ATP-dependent function of SecA. This Sebaldella termitidis (strain ATCC 33386 / NCTC 11300) protein is Protein translocase subunit SecD.